Reading from the N-terminus, the 343-residue chain is Endoglucanase C (343 aa).

The Proton donor role is filled by Glu140. The Nucleophile role is filled by Glu280.

It belongs to the glycosyl hydrolase 5 (cellulase A) family.

The enzyme catalyses Endohydrolysis of (1-&gt;4)-beta-D-glucosidic linkages in cellulose, lichenin and cereal beta-D-glucans.. The protein operates within glycan metabolism; cellulose degradation. In terms of biological role, this enzyme catalyzes the endohydrolysis of 1,4-beta-glucosidic linkages in cellulose, lichenin and cereal beta-D-glucans. The polypeptide is Endoglucanase C (celC) (Acetivibrio thermocellus (strain ATCC 27405 / DSM 1237 / JCM 9322 / NBRC 103400 / NCIMB 10682 / NRRL B-4536 / VPI 7372) (Clostridium thermocellum)).